The following is a 197-amino-acid chain: Cell division protein SepF (197 aa).

A disordered region spans residues 15-91 (DEEEVESPEE…PPSKSNGKNV (77 aa)). Positions 22-31 (PEERQRRVVQ) are enriched in basic and acidic residues. Low complexity predominate over residues 37–47 (TNNVQQNQPQQ). Composition is skewed to polar residues over residues 48–58 (SERSYSNQSKL) and 78–91 (RMNQ…GKNV).

The protein belongs to the SepF family. In terms of assembly, homodimer. Interacts with FtsZ.

The protein localises to the cytoplasm. Functionally, cell division protein that is part of the divisome complex and is recruited early to the Z-ring. Probably stimulates Z-ring formation, perhaps through the cross-linking of FtsZ protofilaments. Its function overlaps with FtsA. This Staphylococcus haemolyticus (strain JCSC1435) protein is Cell division protein SepF.